A 494-amino-acid chain; its full sequence is Zinc finger and SCAN domain-containing protein 30 (494 aa).

In terms of domain architecture, SCAN box spans 48–130 (RQKFRQFSYS…TMLEELEKEL (83 aa)). Lys197 participates in a covalent cross-link: Glycyl lysine isopeptide (Lys-Gly) (interchain with G-Cter in SUMO2). 7 consecutive C2H2-type zinc fingers follow at residues 301 to 323 (YECF…QRIH), 329 to 351 (YACK…QRIH), 357 to 379 (YECC…RRIH), 385 to 407 (YECG…KKIH), 413 to 435 (YECI…QRIH), 441 to 463 (YECN…QRIH), and 469 to 491 (YECS…QRTH).

It belongs to the krueppel C2H2-type zinc-finger protein family.

The protein localises to the nucleus. May be involved in transcriptional regulation. This Homo sapiens (Human) protein is Zinc finger and SCAN domain-containing protein 30 (ZSCAN30).